The following is a 165-amino-acid chain: Thiol peroxidase (165 aa).

The Thioredoxin domain maps to 17–165; it reads PQVGEIVENF…NYEAALAVLA (149 aa). C59 serves as the catalytic Cysteine sulfenic acid (-SOH) intermediate. Cysteines 59 and 93 form a disulfide.

The protein belongs to the peroxiredoxin family. Tpx subfamily. Homodimer.

The enzyme catalyses a hydroperoxide + [thioredoxin]-dithiol = an alcohol + [thioredoxin]-disulfide + H2O. Functionally, thiol-specific peroxidase that catalyzes the reduction of hydrogen peroxide and organic hydroperoxides to water and alcohols, respectively. Plays a role in cell protection against oxidative stress by detoxifying peroxides. This is Thiol peroxidase from Haemophilus influenzae (strain ATCC 51907 / DSM 11121 / KW20 / Rd).